The following is a 170-amino-acid chain: Photosystem I assembly protein Ycf3 (170 aa).

TPR repeat units lie at residues 35–68 (AFTHYRDGMSAQSEGEYAEALQNYYEAMRLEIDP), 72–105 (SYILYNIGLIHTSNGEHAKALEYYFQALERNSSL), and 120–153 (GEQAIEEGDPETCEVWFDQAADYWKKAISLAPSN).

Belongs to the Ycf3 family.

It is found in the plastid. The protein localises to the chloroplast thylakoid membrane. Functionally, essential for the assembly of the photosystem I (PSI) complex. May act as a chaperone-like factor to guide the assembly of the PSI subunits. The polypeptide is Photosystem I assembly protein Ycf3 (Anthoceros angustus (Hornwort)).